Here is a 472-residue protein sequence, read N- to C-terminus: Alkaline phosphatase (472 aa).

The N-terminal stretch at 1–21 (MKQSAIALALLSCLITPVSQA) is a signal peptide. Aspartate 74 provides a ligand contact to Mg(2+). Aspartate 74 provides a ligand contact to Zn(2+). Serine 125 serves as the catalytic Phosphoserine intermediate. Residues aspartate 176 and threonine 178 each contribute to the Mg(2+) site. 2 disulfides stabilise this stretch: cysteine 191-cysteine 201 and cysteine 309-cysteine 359. Glutamate 345 provides a ligand contact to Mg(2+). Zn(2+) is bound by residues aspartate 350, histidine 354, aspartate 392, histidine 393, and histidine 435.

Belongs to the alkaline phosphatase family. In terms of assembly, homodimer. The cofactor is Mg(2+). Requires Zn(2+) as cofactor.

The protein localises to the periplasm. The enzyme catalyses a phosphate monoester + H2O = an alcohol + phosphate. The sequence is that of Alkaline phosphatase (phoA) from Escherichia fergusonii (strain ATCC 35469 / DSM 13698 / CCUG 18766 / IAM 14443 / JCM 21226 / LMG 7866 / NBRC 102419 / NCTC 12128 / CDC 0568-73).